The following is a 153-amino-acid chain: Holo-[acyl-carrier-protein] synthase (153 aa).

Mg(2+) contacts are provided by Asp-24 and Glu-78.

The protein belongs to the P-Pant transferase superfamily. AcpS family. The cofactor is Mg(2+).

It localises to the cytoplasm. The enzyme catalyses apo-[ACP] + CoA = holo-[ACP] + adenosine 3',5'-bisphosphate + H(+). In terms of biological role, transfers the 4'-phosphopantetheine moiety from coenzyme A to a Ser of acyl-carrier-protein. This chain is Holo-[acyl-carrier-protein] synthase, found in Bordetella pertussis (strain Tohama I / ATCC BAA-589 / NCTC 13251).